The chain runs to 174 residues: MSESAIVGGGCFWCLEAIFQRVKGVHRVTSGYAGCRRQNPTYEQVCTGTTKCAEVVKIDFDPHIINYEELLHIFFAVHDPTQLNRQGADIGTQYRSVIFPLNEEQKAIAQKVIQKLNPYFENKIVTTIENPGTFYEAESYHQNYYNTHPDQGYCQVVIAPKLKKFMNMFQEYLQ.

Residue Cys11 is part of the active site.

Belongs to the MsrA Met sulfoxide reductase family.

It catalyses the reaction L-methionyl-[protein] + [thioredoxin]-disulfide + H2O = L-methionyl-(S)-S-oxide-[protein] + [thioredoxin]-dithiol. It carries out the reaction [thioredoxin]-disulfide + L-methionine + H2O = L-methionine (S)-S-oxide + [thioredoxin]-dithiol. Has an important function as a repair enzyme for proteins that have been inactivated by oxidation. Catalyzes the reversible oxidation-reduction of methionine sulfoxide in proteins to methionine. This is Peptide methionine sulfoxide reductase MsrA from Nitratiruptor sp. (strain SB155-2).